Reading from the N-terminus, the 140-residue chain is Ribonuclease P protein component (140 aa).

The protein belongs to the RnpA family. As to quaternary structure, consists of a catalytic RNA component (M1 or rnpB) and a protein subunit.

The enzyme catalyses Endonucleolytic cleavage of RNA, removing 5'-extranucleotides from tRNA precursor.. Functionally, RNaseP catalyzes the removal of the 5'-leader sequence from pre-tRNA to produce the mature 5'-terminus. It can also cleave other RNA substrates such as 4.5S RNA. The protein component plays an auxiliary but essential role in vivo by binding to the 5'-leader sequence and broadening the substrate specificity of the ribozyme. The polypeptide is Ribonuclease P protein component (Nostoc punctiforme (strain ATCC 29133 / PCC 73102)).